Consider the following 181-residue polypeptide: Large ribosomal subunit protein uL5 (181 aa).

Belongs to the universal ribosomal protein uL5 family. As to quaternary structure, part of the 50S ribosomal subunit; part of the 5S rRNA/L5/L18/L25 subcomplex. Contacts the 5S rRNA and the P site tRNA. Forms a bridge to the 30S subunit in the 70S ribosome.

In terms of biological role, this is one of the proteins that bind and probably mediate the attachment of the 5S RNA into the large ribosomal subunit, where it forms part of the central protuberance. In the 70S ribosome it contacts protein S13 of the 30S subunit (bridge B1b), connecting the 2 subunits; this bridge is implicated in subunit movement. Contacts the P site tRNA; the 5S rRNA and some of its associated proteins might help stabilize positioning of ribosome-bound tRNAs. This Helicobacter hepaticus (strain ATCC 51449 / 3B1) protein is Large ribosomal subunit protein uL5.